Reading from the N-terminus, the 212-residue chain is HTH-type transcriptional repressor NicS (212 aa).

Positions 14–74 (DRTRDNILKA…SVLEHIYASF (61 aa)) constitute an HTH tetR-type domain. Positions 37–56 (RIEQISTLAKSNDRMIYYYF) form a DNA-binding region, H-T-H motif.

It participates in cofactor degradation; nicotinate degradation [regulation]. Transcriptional repressor for the nicAB operon, encoding the upper aerobic nicotinate degradation pathway. Acts under non-induced conditions: repression of the nicAB operon becomes alleviated in presence of either nicotinate or 6-hydroxynicotinate (6HNA). The sequence is that of HTH-type transcriptional repressor NicS (nicS) from Pseudomonas putida (strain ATCC 47054 / DSM 6125 / CFBP 8728 / NCIMB 11950 / KT2440).